We begin with the raw amino-acid sequence, 493 residues long: Probable cytosol aminopeptidase (493 aa).

Residues Lys257 and Asp262 each contribute to the Mn(2+) site. Residue Lys269 is part of the active site. Asp281, Asp341, and Glu343 together coordinate Mn(2+). The active site involves Arg345.

Belongs to the peptidase M17 family. It depends on Mn(2+) as a cofactor.

The protein resides in the cytoplasm. The catalysed reaction is Release of an N-terminal amino acid, Xaa-|-Yaa-, in which Xaa is preferably Leu, but may be other amino acids including Pro although not Arg or Lys, and Yaa may be Pro. Amino acid amides and methyl esters are also readily hydrolyzed, but rates on arylamides are exceedingly low.. It carries out the reaction Release of an N-terminal amino acid, preferentially leucine, but not glutamic or aspartic acids.. In terms of biological role, presumably involved in the processing and regular turnover of intracellular proteins. Catalyzes the removal of unsubstituted N-terminal amino acids from various peptides. In Prochlorococcus marinus (strain MIT 9211), this protein is Probable cytosol aminopeptidase.